Consider the following 149-residue polypeptide: Deoxyuridine 5'-triphosphate nucleotidohydrolase (149 aa).

Substrate contacts are provided by residues 68 to 70 (RSG), asparagine 81, and 85 to 87 (LID).

The protein belongs to the dUTPase family. Requires Mg(2+) as cofactor.

The catalysed reaction is dUTP + H2O = dUMP + diphosphate + H(+). The protein operates within pyrimidine metabolism; dUMP biosynthesis; dUMP from dCTP (dUTP route): step 2/2. This enzyme is involved in nucleotide metabolism: it produces dUMP, the immediate precursor of thymidine nucleotides and it decreases the intracellular concentration of dUTP so that uracil cannot be incorporated into DNA. In Nitrosospira multiformis (strain ATCC 25196 / NCIMB 11849 / C 71), this protein is Deoxyuridine 5'-triphosphate nucleotidohydrolase.